Consider the following 625-residue polypeptide: MTNNMNNYPLLSLINSPEDLRLLNKDQLPQLCQELRAYLLESVSQTSGHLASGLGTVELTVALHYVYKTPFDQLIWDVGHQAYPHKILTGRREQMSTIRQKDGIHPFPWREESEFDVLSVGHSSTSISAGLGIAVAAERENAGRKTVCVIGDGAITAGMAFEALNHAGALHTDMLVILNDNEMSISENVGALNNHLARIFSGSLYSTLRDGSKKILDKVPPIKNFMKKTEEHMKGVMFSPESTLFEELGFNYIGPVDGHNIDELVAMLTNMRNLKGPQFLHIKTKKGKGYAPAEKDPIGFHGVPKFDPISGELPKNNSKPTYSKIFGDWLCEMAEKDAKIIGITPAMREGSGMVEFSQRFPKQYFDVAIAEQHTVTFATGLAIGGYKPVVAIYSTFLQRAYDQLIHDVAIQNLPVLFAIDRAGIVGADGATHQGAFDISFMRCIPNMIIMTPSDENECRQMLYTGYQCGKPAAVRYPRGNAVGVKLTPLEMLPIGKSRLIRKGQKIAILNFGTLLPSALELSEKLNATVVDMRFVKPIDIEMINVLAQTHDYLVTLEENAIQGGAGSAVAEVLNSSGKSTALLQLGLPDYFIPQATRQEALADLGLDTKGIEEKILNFIAKQGNL.

Residues histidine 80 and 121 to 123 (GHS) each bind thiamine diphosphate. Aspartate 152 contributes to the Mg(2+) binding site. Residues 153 to 154 (GA), asparagine 181, tyrosine 290, and glutamate 371 each bind thiamine diphosphate. Asparagine 181 is a Mg(2+) binding site.

Belongs to the transketolase family. DXPS subfamily. Homodimer. The cofactor is Mg(2+). It depends on thiamine diphosphate as a cofactor.

It catalyses the reaction D-glyceraldehyde 3-phosphate + pyruvate + H(+) = 1-deoxy-D-xylulose 5-phosphate + CO2. Its pathway is metabolic intermediate biosynthesis; 1-deoxy-D-xylulose 5-phosphate biosynthesis; 1-deoxy-D-xylulose 5-phosphate from D-glyceraldehyde 3-phosphate and pyruvate: step 1/1. Functionally, catalyzes the acyloin condensation reaction between C atoms 2 and 3 of pyruvate and glyceraldehyde 3-phosphate to yield 1-deoxy-D-xylulose-5-phosphate (DXP). This Haemophilus influenzae (strain 86-028NP) protein is 1-deoxy-D-xylulose-5-phosphate synthase.